The chain runs to 643 residues: Translation factor GUF1, mitochondrial (643 aa).

A mitochondrion-targeting transit peptide spans 1-18; that stretch reads MLASQAIKRIFHRSWKPL. Positions 43–226 constitute a tr-type G domain; the sequence is ENYRNFSIVA…AIIDRIPPPT (184 aa). GTP is bound by residues 52 to 59, 118 to 122, and 172 to 175; these read AHIDHGKS, DTPGH, and NKID.

This sequence belongs to the TRAFAC class translation factor GTPase superfamily. Classic translation factor GTPase family. LepA subfamily.

The protein localises to the mitochondrion inner membrane. It catalyses the reaction GTP + H2O = GDP + phosphate + H(+). Its function is as follows. Promotes mitochondrial protein synthesis. May act as a fidelity factor of the translation reaction, by catalyzing a one-codon backward translocation of tRNAs on improperly translocated ribosomes. Binds to mitochondrial ribosomes in a GTP-dependent manner. The sequence is that of Translation factor GUF1, mitochondrial from Zygosaccharomyces rouxii (strain ATCC 2623 / CBS 732 / NBRC 1130 / NCYC 568 / NRRL Y-229).